Consider the following 648-residue polypeptide: Mitochondrial Rho GTPase 3 (648 aa).

Topologically, residues 1–621 (MWMGVGDSSG…KRSCKLNNRS (621 aa)) are cytoplasmic. The residue at position 11 (S11) is a Phosphoserine. The Miro 1 domain occupies 12–179 (PKPIRIVVVG…LYYAQKAVID (168 aa)). EF-hand domains are found at residues 195–230 (RCIAALKRIFLLSDHNMDGILSDEELNELQKKCFDT) and 316–351 (VAIEFLREVYEFFDSNGDNNLEPHEMGYLFETAPES). 9 residues coordinate Ca(2+): D208, N210, D212, E219, D329, N331, D333, N335, and E340. The region spanning 425–599 (RKVVQCFVFG…FRKILTAAEN (175 aa)) is the Miro 2 domain. The helical transmembrane segment at 622 to 644 (LMAVSIGTAVLIAGLASFRLYTA) threads the bilayer. Topologically, residues 645-648 (RKQS) are mitochondrial intermembrane.

Belongs to the mitochondrial Rho GTPase family. As to expression, expressed at very low levels in roots, leaves, stems, flowers and siliques.

The protein resides in the mitochondrion outer membrane. Functionally, mitochondrial GTPase that may be involved in mitochondrion development. This chain is Mitochondrial Rho GTPase 3, found in Arabidopsis thaliana (Mouse-ear cress).